We begin with the raw amino-acid sequence, 120 residues long: V-type proton ATPase subunit F (120 aa).

This sequence belongs to the V-ATPase F subunit family. In terms of assembly, V-ATPase is a heteromultimeric enzyme composed of a peripheral catalytic V1 complex (components A to H) attached to an integral membrane V0 proton pore complex (components: a, c, c', c'', d, e, f and VOA1).

The protein resides in the vacuole membrane. In terms of biological role, subunit of the V1 complex of vacuolar(H+)-ATPase (V-ATPase), a multisubunit enzyme composed of a peripheral complex (V1) that hydrolyzes ATP and a membrane integral complex (V0) that translocates protons. V-ATPase is responsible for acidifying and maintaining the pH of intracellular compartments. This chain is V-type proton ATPase subunit F, found in Schizosaccharomyces pombe (strain 972 / ATCC 24843) (Fission yeast).